We begin with the raw amino-acid sequence, 108 residues long: UPF0060 membrane protein KPK_2870 (108 aa).

The next 4 membrane-spanning stretches (helical) occupy residues 6–26 (LLFF…WLWL), 29–49 (GATP…VWLL), 61–81 (AAYG…VDGV), and 86–106 (YDWA…AGWG).

The protein belongs to the UPF0060 family.

The protein localises to the cell inner membrane. The sequence is that of UPF0060 membrane protein KPK_2870 from Klebsiella pneumoniae (strain 342).